A 159-amino-acid polypeptide reads, in one-letter code: Fimbrial protein MyfA (159 aa).

The first 29 residues, 1–29, serve as a signal peptide directing secretion; it reads MNMKKFVKKPLAIAVLMLASGGMVNMVHA.

In terms of assembly, forms a homomer composed of subunits assembled in a large structure resistant to proteases and chaotropic agents.

It is found in the fimbrium. Functionally, major pilus subunit. Expressed only in pathogenic serotypes, it is part of myf, a probable virulence factor. The chain is Fimbrial protein MyfA (myfA) from Yersinia enterocolitica.